Consider the following 488-residue polypeptide: 3-octaprenyl-4-hydroxybenzoate carboxy-lyase (488 aa).

Asparagine 172 is a binding site for Mn(2+). Residues 175–177 (IYR), 189–191 (RWL), and 194–195 (RG) each bind prenylated FMN. Glutamate 238 contributes to the Mn(2+) binding site. Aspartate 287 acts as the Proton donor in catalysis.

It belongs to the UbiD family. Homohexamer. The cofactor is prenylated FMN. Requires Mn(2+) as cofactor.

It is found in the cell membrane. The catalysed reaction is a 4-hydroxy-3-(all-trans-polyprenyl)benzoate + H(+) = a 2-(all-trans-polyprenyl)phenol + CO2. Its pathway is cofactor biosynthesis; ubiquinone biosynthesis. Functionally, catalyzes the decarboxylation of 3-octaprenyl-4-hydroxy benzoate to 2-octaprenylphenol, an intermediate step in ubiquinone biosynthesis. The polypeptide is 3-octaprenyl-4-hydroxybenzoate carboxy-lyase (Pseudoalteromonas translucida (strain TAC 125)).